We begin with the raw amino-acid sequence, 60 residues long: Large ribosomal subunit protein bL32 (60 aa).

A disordered region spans residues methionine 1 to glutamate 60. The segment covering arginine 49–glutamate 60 has biased composition (basic residues).

This sequence belongs to the bacterial ribosomal protein bL32 family.

The chain is Large ribosomal subunit protein bL32 from Bordetella bronchiseptica (strain ATCC BAA-588 / NCTC 13252 / RB50) (Alcaligenes bronchisepticus).